Consider the following 294-residue polypeptide: Pyridoxal 5'-phosphate synthase subunit PdxS (294 aa).

Aspartate 24 lines the D-ribose 5-phosphate pocket. Lysine 81 functions as the Schiff-base intermediate with D-ribose 5-phosphate in the catalytic mechanism. Glycine 153 is a binding site for D-ribose 5-phosphate. Arginine 165 serves as a coordination point for D-glyceraldehyde 3-phosphate. Residues glycine 214 and 235–236 (GS) contribute to the D-ribose 5-phosphate site.

It belongs to the PdxS/SNZ family. In terms of assembly, in the presence of PdxT, forms a dodecamer of heterodimers.

The catalysed reaction is aldehydo-D-ribose 5-phosphate + D-glyceraldehyde 3-phosphate + L-glutamine = pyridoxal 5'-phosphate + L-glutamate + phosphate + 3 H2O + H(+). It participates in cofactor biosynthesis; pyridoxal 5'-phosphate biosynthesis. Its function is as follows. Catalyzes the formation of pyridoxal 5'-phosphate from ribose 5-phosphate (RBP), glyceraldehyde 3-phosphate (G3P) and ammonia. The ammonia is provided by the PdxT subunit. Can also use ribulose 5-phosphate and dihydroxyacetone phosphate as substrates, resulting from enzyme-catalyzed isomerization of RBP and G3P, respectively. This is Pyridoxal 5'-phosphate synthase subunit PdxS from Anoxybacillus flavithermus (strain DSM 21510 / WK1).